A 421-amino-acid chain; its full sequence is Gamma-glutamyl phosphate reductase (421 aa).

The protein belongs to the gamma-glutamyl phosphate reductase family.

The protein resides in the cytoplasm. The catalysed reaction is L-glutamate 5-semialdehyde + phosphate + NADP(+) = L-glutamyl 5-phosphate + NADPH + H(+). It functions in the pathway amino-acid biosynthesis; L-proline biosynthesis; L-glutamate 5-semialdehyde from L-glutamate: step 2/2. In terms of biological role, catalyzes the NADPH-dependent reduction of L-glutamate 5-phosphate into L-glutamate 5-semialdehyde and phosphate. The product spontaneously undergoes cyclization to form 1-pyrroline-5-carboxylate. In Azotobacter vinelandii (strain DJ / ATCC BAA-1303), this protein is Gamma-glutamyl phosphate reductase.